A 313-amino-acid chain; its full sequence is Aspartate carbamoyltransferase catalytic subunit (313 aa).

Carbamoyl phosphate-binding residues include Arg-54 and Thr-55. Lys-82 serves as a coordination point for L-aspartate. Positions 104, 132, and 135 each coordinate carbamoyl phosphate. Residues Arg-165 and Arg-219 each contribute to the L-aspartate site. Carbamoyl phosphate contacts are provided by Gly-260 and Pro-261.

This sequence belongs to the aspartate/ornithine carbamoyltransferase superfamily. ATCase family. Heterododecamer (2C3:3R2) of six catalytic PyrB chains organized as two trimers (C3), and six regulatory PyrI chains organized as three dimers (R2).

It carries out the reaction carbamoyl phosphate + L-aspartate = N-carbamoyl-L-aspartate + phosphate + H(+). Its pathway is pyrimidine metabolism; UMP biosynthesis via de novo pathway; (S)-dihydroorotate from bicarbonate: step 2/3. Functionally, catalyzes the condensation of carbamoyl phosphate and aspartate to form carbamoyl aspartate and inorganic phosphate, the committed step in the de novo pyrimidine nucleotide biosynthesis pathway. This chain is Aspartate carbamoyltransferase catalytic subunit, found in Thermobifida fusca (strain YX).